A 104-amino-acid chain; its full sequence is Co-chaperonin GroES 2 (104 aa).

This sequence belongs to the GroES chaperonin family. In terms of assembly, heptamer of 7 subunits arranged in a ring. Interacts with the chaperonin GroEL.

It localises to the cytoplasm. Functionally, together with the chaperonin GroEL, plays an essential role in assisting protein folding. The GroEL-GroES system forms a nano-cage that allows encapsulation of the non-native substrate proteins and provides a physical environment optimized to promote and accelerate protein folding. GroES binds to the apical surface of the GroEL ring, thereby capping the opening of the GroEL channel. The chain is Co-chaperonin GroES 2 from Mesorhizobium japonicum (strain LMG 29417 / CECT 9101 / MAFF 303099) (Mesorhizobium loti (strain MAFF 303099)).